The sequence spans 474 residues: Proline--tRNA ligase (474 aa).

Belongs to the class-II aminoacyl-tRNA synthetase family. ProS type 3 subfamily. In terms of assembly, homodimer.

The protein resides in the cytoplasm. It catalyses the reaction tRNA(Pro) + L-proline + ATP = L-prolyl-tRNA(Pro) + AMP + diphosphate. Functionally, catalyzes the attachment of proline to tRNA(Pro) in a two-step reaction: proline is first activated by ATP to form Pro-AMP and then transferred to the acceptor end of tRNA(Pro). The sequence is that of Proline--tRNA ligase from Phytoplasma australiense.